The chain runs to 356 residues: ATP-dependent 6-phosphofructokinase (356 aa).

ATP is bound by residues Gly-15, 78-79 (KG), and 115-118 (GEGT). A Mg(2+)-binding site is contributed by Glu-116. Substrate is bound by residues 138-140 (TID), Arg-175, 182-184 (MGR), Glu-235, Arg-272, and 278-281 (HLQR). Catalysis depends on Asp-140, which acts as the Proton acceptor.

Belongs to the phosphofructokinase type A (PFKA) family. Mixed-substrate PFK group III subfamily. Homodimer or homotetramer. It depends on Mg(2+) as a cofactor.

The protein localises to the cytoplasm. The enzyme catalyses beta-D-fructose 6-phosphate + ATP = beta-D-fructose 1,6-bisphosphate + ADP + H(+). It participates in carbohydrate degradation; glycolysis; D-glyceraldehyde 3-phosphate and glycerone phosphate from D-glucose: step 3/4. Its function is as follows. Catalyzes the phosphorylation of D-fructose 6-phosphate to fructose 1,6-bisphosphate by ATP, the first committing step of glycolysis. The polypeptide is ATP-dependent 6-phosphofructokinase (Chloroflexus aurantiacus (strain ATCC 29366 / DSM 635 / J-10-fl)).